Consider the following 365-residue polypeptide: Putrescine 2-hydroxylase (365 aa).

Residues 44–141 (GHELMVPEVG…LQNWNGLLFE (98 aa)) enclose the Rieske domain. [2Fe-2S] cluster is bound by residues Cys81, His83, Cys100, and His103.

This sequence belongs to the bacterial ring-hydroxylating dioxygenase alpha subunit family. It depends on [2Fe-2S] cluster as a cofactor.

In terms of biological role, rieske-type iron sulfur protein that can catalyze in vitro the 2-hydroxylation of putrescine, forming 2-hydroxyputrescine. May be involved in the biosynthesis of the cyclic hydroxamate siderophore alcaligin. This is Putrescine 2-hydroxylase from Ralstonia nicotianae (strain ATCC BAA-1114 / GMI1000) (Ralstonia solanacearum).